Consider the following 127-residue polypeptide: Glycine cleavage system H protein (127 aa).

In terms of domain architecture, Lipoyl-binding spans 24–106 (VVTVGVTFHA…YGAGWFFKLK (83 aa)). Lys65 is subject to N6-lipoyllysine.

The protein belongs to the GcvH family. In terms of assembly, the glycine cleavage system is composed of four proteins: P, T, L and H. (R)-lipoate is required as a cofactor.

The glycine cleavage system catalyzes the degradation of glycine. The H protein shuttles the methylamine group of glycine from the P protein to the T protein. In Laribacter hongkongensis (strain HLHK9), this protein is Glycine cleavage system H protein.